A 623-amino-acid polypeptide reads, in one-letter code: DNA polymerase alpha subunit B (623 aa).

The interval 113–151 is disordered; it reads IPKIKDEPSSSVDVSTARNKNNHNNNNNNNPSLPNKSMF. The span at 121 to 130 shows a compositional bias: polar residues; the sequence is SSSVDVSTAR.

This sequence belongs to the DNA polymerase alpha subunit B family. As to quaternary structure, DNA polymerase alpha:primase is a four subunit enzyme complex, which is assembled throughout the cell cycle, and consists of the two DNA polymerase subunits A and B, and the DNA primase large and small subunits. Subunit B binds to subunit A.

The protein localises to the nucleus. Functionally, may play an essential role at the early stage of chromosomal DNA replication by coupling the polymerase alpha/primase complex to the cellular replication machinery. This Dictyostelium discoideum (Social amoeba) protein is DNA polymerase alpha subunit B (polA2).